Here is a 480-residue protein sequence, read N- to C-terminus: Heparin cofactor 2 (480 aa).

Positions 1 to 19 are cleaved as a signal peptide; it reads MQHRPHLLLISLTIMSVCG. Asparagine 32 is a glycosylation site (N-linked (GlcNAc...) asparagine). Repeat copies occupy residues 56–66 and 70–80. A 2 X 11 AA approximate repeats, Asp/Glu-rich (acidic) (hirudin-like) region spans residues 56–80; it reads GEEDDDYLDLEKLLSEDDDYIDIID. Sulfotyrosine occurs at positions 62 and 75. N-linked (GlcNAc...) asparagine glycosylation is present at asparagine 169. The segment at 173–193 is glycosaminoglycan-binding site; sequence KYEILTIHNLFRKLTHRLFRR. N-linked (GlcNAc...) asparagine glycosylation is found at asparagine 368 and asparagine 404.

It belongs to the serpin family. N-glycosylated; different glycan composition appears to lead to two forms of this protein (56 and 60 kDa).

Its function is as follows. Thrombin inhibitor activated by the glycosaminoglycans, heparin or dermatan sulfate. In the presence of the latter, HC-II becomes the predominant thrombin inhibitor in place of antithrombin III (AT). The polypeptide is Heparin cofactor 2 (SERPIND1) (Oryctolagus cuniculus (Rabbit)).